Reading from the N-terminus, the 1041-residue chain is Isoleucine--tRNA ligase (1041 aa).

Positions 53 to 63 (PFANGLPHYGH) match the 'HIGH' region motif. Positions 619–623 (KMSKS) match the 'KMSKS' region motif. K622 lines the ATP pocket.

Belongs to the class-I aminoacyl-tRNA synthetase family. IleS type 2 subfamily. Monomer. It depends on Zn(2+) as a cofactor.

It is found in the cytoplasm. The enzyme catalyses tRNA(Ile) + L-isoleucine + ATP = L-isoleucyl-tRNA(Ile) + AMP + diphosphate. Its function is as follows. Catalyzes the attachment of isoleucine to tRNA(Ile). As IleRS can inadvertently accommodate and process structurally similar amino acids such as valine, to avoid such errors it has two additional distinct tRNA(Ile)-dependent editing activities. One activity is designated as 'pretransfer' editing and involves the hydrolysis of activated Val-AMP. The other activity is designated 'posttransfer' editing and involves deacylation of mischarged Val-tRNA(Ile). The protein is Isoleucine--tRNA ligase of Mycobacterium bovis (strain ATCC BAA-935 / AF2122/97).